The sequence spans 68 residues: Protein SlyX homolog (68 aa).

Belongs to the SlyX family.

The sequence is that of Protein SlyX homolog from Ectopseudomonas mendocina (strain ymp) (Pseudomonas mendocina).